A 263-amino-acid chain; its full sequence is GTP cyclohydrolase 1 type 2 homolog (263 aa).

His-65, His-66, Asp-104, His-225, and Glu-229 together coordinate a divalent metal cation.

It belongs to the GTP cyclohydrolase I type 2/NIF3 family. As to quaternary structure, homohexamer.

In Nostoc sp. (strain PCC 7120 / SAG 25.82 / UTEX 2576), this protein is GTP cyclohydrolase 1 type 2 homolog.